Here is a 226-residue protein sequence, read N- to C-terminus: UPF0173 metal-dependent hydrolase Minf_0129 (226 aa).

Belongs to the UPF0173 family.

The polypeptide is UPF0173 metal-dependent hydrolase Minf_0129 (Methylacidiphilum infernorum (isolate V4) (Methylokorus infernorum (strain V4))).